A 657-amino-acid chain; its full sequence is N-acetylgalactosaminyltransferase 7 (657 aa).

Residues 1–6 (MRLKIG) lie on the Cytoplasmic side of the membrane. Residues 7–29 (FILRSLLVVGSFLGLVVLWSSLS) traverse the membrane as a helical; Signal-anchor for type II membrane protein segment. 2 disordered regions span residues 30–66 (SRPD…DDRF) and 83–105 (ESIR…DSQR). The Lumenal portion of the chain corresponds to 30–657 (SRPDDQSPLS…KWEMNNIHSV (628 aa)). Intrachain disulfides connect C197-C435, C426-C507, C545-C562, C585-C600, and C625-C640. A catalytic subdomain A region spans residues 206–317 (LLTSSVVIVF…VNWYAPLVAP (112 aa)). Residues D247 and R277 each contribute to the substrate site. Mn(2+)-binding residues include D301 and H303. The interval 381-443 (PYRSPAMAGG…PCSRVGHIYR (63 aa)) is catalytic subdomain B. W412 is a binding site for substrate. H440 lines the Mn(2+) pocket. Position 443 (R443) interacts with substrate. The Ricin B-type lectin domain occupies 532-652 (VEWGEIRGLE…SKMTQKWEMN (121 aa)).

Belongs to the glycosyltransferase 2 family. GalNAc-T subfamily. The cofactor is Mn(2+). As to expression, highly expressed in sublingual gland. Expressed at lower level in stomach, small intestiine and colon.

The protein resides in the golgi apparatus membrane. It catalyses the reaction L-seryl-[protein] + UDP-N-acetyl-alpha-D-galactosamine = a 3-O-[N-acetyl-alpha-D-galactosaminyl]-L-seryl-[protein] + UDP + H(+). The enzyme catalyses L-threonyl-[protein] + UDP-N-acetyl-alpha-D-galactosamine = a 3-O-[N-acetyl-alpha-D-galactosaminyl]-L-threonyl-[protein] + UDP + H(+). Its pathway is protein modification; protein glycosylation. Functionally, glycopeptide transferase involved in O-linked oligosaccharide biosynthesis, which catalyzes the transfer of an N-acetyl-D-galactosamine residue to an already glycosylated peptide. In contrast to other proteins of the family, it does not act as a peptide transferase that transfers GalNAc onto serine or threonine residue on the protein receptor, but instead requires the prior addition of a GalNAc on a peptide before adding additional GalNAc moieties. Some peptide transferase activity is however not excluded, considering that its appropriate peptide substrate may remain unidentified. This chain is N-acetylgalactosaminyltransferase 7 (Galnt7), found in Mus musculus (Mouse).